The primary structure comprises 327 residues: MDDRGPDVAPAVVTTADEIAAMEIRGAATIADAAAEALAIQAERSDAERPDAFERQLRAAAKTLYETRPTAVSLPNALRYVLAGMDGETVAELRASTIARAEEFQRDLAQAQSKLGSVGANRLRDGDVVMTHCHSTDALACLEAAVEDGTEIEAIVKETRPRLQGHITARQLREWDVPVTVIVDGAARRYLDQADHVLVGADSIAADGSVINKIGTSGLAVIARERGVPVTVAAQTIKLHPDTMTGHTVEIERRDEREVLDDDERAAITDTADGADDGLTVENPAFDVTPPRYVDAIVTEHGQFPPETVVTLMRELFGETVDEPWEL.

Substrate is bound by residues 25–28 (RGAA) and Arg-68. Cys-133 serves as the catalytic Proton acceptor. Asp-202 functions as the Proton donor in the catalytic mechanism. Substrate-binding positions include 212 to 213 (NK) and Lys-238.

The protein belongs to the eIF-2B alpha/beta/delta subunits family. R15P isomerase subfamily.

It carries out the reaction alpha-D-ribose 1,5-bisphosphate = D-ribulose 1,5-bisphosphate. Isomerase involved in the non-carboxylating pentose bisphosphate pathway, a nucleoside degradation pathway present in some halophilic archaea. Catalyzes the isomerization of ribose 1,5-bisphosphate (R15P) to ribulose 1,5-bisphosphate (RuBP). This is Ribose 1,5-bisphosphate isomerase from Haloterrigena turkmenica (strain ATCC 51198 / DSM 5511 / JCM 9101 / NCIMB 13204 / VKM B-1734 / 4k) (Halococcus turkmenicus).